The primary structure comprises 262 residues: Hydroxyethylthiazole kinase (262 aa).

Methionine 41 serves as a coordination point for substrate. The ATP site is built by arginine 117 and serine 163. Glycine 190 lines the substrate pocket.

It belongs to the Thz kinase family. It depends on Mg(2+) as a cofactor.

The enzyme catalyses 5-(2-hydroxyethyl)-4-methylthiazole + ATP = 4-methyl-5-(2-phosphooxyethyl)-thiazole + ADP + H(+). It participates in cofactor biosynthesis; thiamine diphosphate biosynthesis; 4-methyl-5-(2-phosphoethyl)-thiazole from 5-(2-hydroxyethyl)-4-methylthiazole: step 1/1. In terms of biological role, catalyzes the phosphorylation of the hydroxyl group of 4-methyl-5-beta-hydroxyethylthiazole (THZ). The chain is Hydroxyethylthiazole kinase from Levilactobacillus brevis (strain ATCC 367 / BCRC 12310 / CIP 105137 / JCM 1170 / LMG 11437 / NCIMB 947 / NCTC 947) (Lactobacillus brevis).